The following is a 244-amino-acid chain: MLIKSIGMYLIGILILFIALYPRHSFAFEPNIDFNAPDWVEERESADNDIPELPRAGSLFGSGDKPLFSDRRAMKPDDLITIVISENANANFTTNKNYNGASGGNVTPPSIEYTGNNEEQKQIVSELNDQAAYNLTKANNTSNFQGGGAQTRSEALNATITARIVKVLDNNTYFIHGRREVLVDGEKQILELSGVVRSFDISKDNVVQSKHIANAKIAYTSLGPISDTNHKKPVSDGIESLYPF.

The signal sequence occupies residues 1–27 (MLIKSIGMYLIGILILFIALYPRHSFA).

Belongs to the FlgH family. As to quaternary structure, the basal body constitutes a major portion of the flagellar organelle and consists of four rings (L,P,S, and M) mounted on a central rod.

The protein localises to the cell outer membrane. The protein resides in the bacterial flagellum basal body. Its function is as follows. Assembles around the rod to form the L-ring and probably protects the motor/basal body from shearing forces during rotation. The polypeptide is Flagellar L-ring protein (flgH) (Helicobacter hepaticus (strain ATCC 51449 / 3B1)).